A 43-amino-acid chain; its full sequence is Protein PsbN (43 aa).

Residues 5-27 (TVFSIFISCLLLSLTGYSLYTAF) traverse the membrane as a helical segment.

It belongs to the PsbN family.

Its subcellular location is the plastid. It localises to the chloroplast thylakoid membrane. Functionally, may play a role in photosystem I and II biogenesis. This chain is Protein PsbN, found in Chlorokybus atmophyticus (Soil alga).